Reading from the N-terminus, the 610-residue chain is L-galactono-1,4-lactone dehydrogenase, mitochondrial (610 aa).

A mitochondrion-targeting transit peptide spans 1–35 (MLRSLLLRRSVGHSLGTLSPSSSTIRSSFSPHRTL). The interval 17–61 (TLSPSSSTIRSSFSPHRTLCTTGQTLTPPPPPPPRPPPPPPATAS) is disordered. Residues 19–30 (SPSSSTIRSSFS) are compositionally biased toward low complexity. Positions 36–101 (CTTGQTLTPP…AKHKKAQIFR (66 aa)) are cleaved as a propeptide — removed in mature form. Residues 43–58 (TPPPPPPPRPPPPPPA) are compositionally biased toward pro residues. The chain crosses the membrane as a helical span at residues 68–84 (YAGYAALAIFSGVATYF). One can recognise an FAD-binding PCMH-type domain in the interval 123–258 (TRNFNQPENL…TPAKGTIELS (136 aa)).

FAD serves as cofactor.

Its subcellular location is the mitochondrion membrane. The catalysed reaction is L-galactono-1,4-lactone + 4 Fe(III)-[cytochrome c] = L-dehydroascorbate + 4 Fe(II)-[cytochrome c] + 5 H(+). It catalyses the reaction L-gulono-1,4-lactone + 2 Fe(III)-[cytochrome c] = L-ascorbate + 2 Fe(II)-[cytochrome c] + 3 H(+). Its pathway is cofactor biosynthesis; L-ascorbate biosynthesis. Its function is as follows. Involved in the biosynthesis of ascorbate. Catalyzes the final step of ascorbate biosynthesis. Uses L-galactono-1,4-lactone and L-gulono-1,4-lactone as substrates, but not D-galactono-1,4-lactone, D-gulono-1,4-lactone, L-mannono-1,4-lactone or D-galactonic acid. Also active with phenazine methosulfate and 1,4-benzoquinone as electron acceptors. Involved in the regulation of the accumulation of the mitochondrial respiratory complex I. Structural part of one of the plant-specific mitochondrial complex I assembly intermediates, lacking the whole distal (PD) module. Prevents the binding of the plant specific P1 protein (CPN60/HSP60), responsible for the linkage of the proximal (PP) to the distal (PD) module. This chain is L-galactono-1,4-lactone dehydrogenase, mitochondrial, found in Arabidopsis thaliana (Mouse-ear cress).